The chain runs to 239 residues: Small ribosomal subunit protein eS1 (239 aa).

Residues 1 to 24 (MAIQPPGSYPQGNKKGKAKKKSGQ) form a disordered region.

The protein belongs to the eukaryotic ribosomal protein eS1 family. In terms of assembly, component of the small ribosomal subunit. Mature ribosomes consist of a small (40S) and a large (60S) subunit. The 40S subunit contains about 33 different proteins and 1 molecule of RNA (18S). The 60S subunit contains about 49 different proteins and 3 molecules of RNA (25S, 5.8S and 5S).

Its subcellular location is the cytoplasm. The sequence is that of Small ribosomal subunit protein eS1 from Encephalitozoon cuniculi (strain GB-M1) (Microsporidian parasite).